The primary structure comprises 311 residues: Bifunctional pinoresinol-lariciresinol reductase (311 aa).

NADP(+) is bound by residues 10–16 (GGTGYLG), Arg35, and Lys44. The active-site Proton acceptor is Lys138. Arg142 contributes to the NADP(+) binding site. His270 is a substrate binding site.

It belongs to the NmrA-type oxidoreductase family. Isoflavone reductase subfamily. In terms of assembly, dimer. In terms of tissue distribution, expressed in rhizomes, stems, and leaves.

The enzyme catalyses (-)-secoisolariciresinol + NADP(+) = (+)-lariciresinol + NADPH + H(+). The catalysed reaction is (+)-lariciresinol + NADP(+) = (+)-pinoresinol + NADPH + H(+). Its pathway is aromatic compound metabolism; phenylpropanoid biosynthesis. In terms of biological role, reductase involved in lignan biosynthesis. Also involved in the biosynthesis of etoposide, a chemotherapeutic compound of the topoisomerase inhibitor family. Catalyzes the enantioselective sequential conversion of (+)-pinoresinol into (+)-lariciresinol and of (+)-lariciresinol into (-)-secoisolariciresinol. Abstracts the 4R-hydride from the NADPH cofactor during catalysis. The polypeptide is Bifunctional pinoresinol-lariciresinol reductase (Sinopodophyllum hexandrum (Himalayan may apple)).